Consider the following 69-residue polypeptide: Putative membrane protein insertion efficiency factor (69 aa).

It belongs to the UPF0161 family.

The protein localises to the cell inner membrane. Functionally, could be involved in insertion of integral membrane proteins into the membrane. This chain is Putative membrane protein insertion efficiency factor, found in Laribacter hongkongensis (strain HLHK9).